A 720-amino-acid polypeptide reads, in one-letter code: Putative fatty acid oxidation complex trifunctional enzyme (720 aa).

A 3-hydroxyacyl-CoA dehydrogenase region spans residues 1 to 384 (MQNEIKKVCV…SWHYGPFELL (384 aa)). Residues 453–720 (FVITTKMNSL…TIEKLQAIVG (268 aa)) are enoyl-CoA hydratase/isomerase.

In the N-terminal section; belongs to the 3-hydroxyacyl-CoA dehydrogenase family. It in the C-terminal section; belongs to the enoyl-CoA hydratase/isomerase family.

It catalyses the reaction a (3S)-3-hydroxyacyl-CoA + NAD(+) = a 3-oxoacyl-CoA + NADH + H(+). It carries out the reaction a (3S)-3-hydroxyacyl-CoA = a (2E)-enoyl-CoA + H2O. The enzyme catalyses a 4-saturated-(3S)-3-hydroxyacyl-CoA = a (3E)-enoyl-CoA + H2O. The catalysed reaction is a (3Z)-enoyl-CoA = a 4-saturated (2E)-enoyl-CoA. It catalyses the reaction a (3E)-enoyl-CoA = a 4-saturated (2E)-enoyl-CoA. The chain is Putative fatty acid oxidation complex trifunctional enzyme from Rickettsia prowazekii (strain Madrid E).